Here is a 233-residue protein sequence, read N- to C-terminus: Aspartate/glutamate leucyltransferase (233 aa).

Belongs to the R-transferase family. Bpt subfamily.

Its subcellular location is the cytoplasm. It carries out the reaction N-terminal L-glutamyl-[protein] + L-leucyl-tRNA(Leu) = N-terminal L-leucyl-L-glutamyl-[protein] + tRNA(Leu) + H(+). It catalyses the reaction N-terminal L-aspartyl-[protein] + L-leucyl-tRNA(Leu) = N-terminal L-leucyl-L-aspartyl-[protein] + tRNA(Leu) + H(+). Functionally, functions in the N-end rule pathway of protein degradation where it conjugates Leu from its aminoacyl-tRNA to the N-termini of proteins containing an N-terminal aspartate or glutamate. This chain is Aspartate/glutamate leucyltransferase, found in Vibrio parahaemolyticus serotype O3:K6 (strain RIMD 2210633).